We begin with the raw amino-acid sequence, 326 residues long: Septum site-determining protein minD homolog, chloroplastic (326 aa).

A chloroplast-targeting transit peptide spans 1–62 (MASLRLFSTN…LAGETPRIVV (62 aa)). Residue 67-74 (KGGVGKTT) participates in ATP binding.

It belongs to the ParA family. MinD subfamily. As to quaternary structure, homodimer. Interacts with MINE1. Binds to ARC3. Interacts with MCD1. Interacts with CDP1/PARC6.

The protein localises to the plastid. Its subcellular location is the chloroplast inner membrane. Stimulated ATPase activity by MINE1. In terms of biological role, together with ARC3 and MCD1, regulates FtsZ ring positioning in chloroplasts in an ARC6-dependent manner. Calcium-dependent ATPase required for the correct placement of the plastid division site. Inhibits FtsZ filament and ring formation in the plastid. Mediates inhibition of plastid division. In cooperation with MINE1, prevents FtsZ ring formation anywhere outside of the mid-plastids. This is Septum site-determining protein minD homolog, chloroplastic from Arabidopsis thaliana (Mouse-ear cress).